A 202-amino-acid chain; its full sequence is Dephospho-CoA kinase (202 aa).

Positions 4-201 (VVALTGGIAS…QKYLAMSRQN (198 aa)) constitute a DPCK domain. Position 12 to 17 (12 to 17 (ASGKTT)) interacts with ATP.

It belongs to the CoaE family.

The protein resides in the cytoplasm. The catalysed reaction is 3'-dephospho-CoA + ATP = ADP + CoA + H(+). It participates in cofactor biosynthesis; coenzyme A biosynthesis; CoA from (R)-pantothenate: step 5/5. Functionally, catalyzes the phosphorylation of the 3'-hydroxyl group of dephosphocoenzyme A to form coenzyme A. This chain is Dephospho-CoA kinase, found in Vibrio cholerae serotype O1 (strain ATCC 39315 / El Tor Inaba N16961).